A 256-amino-acid chain; its full sequence is Expansin-like B1 (256 aa).

The first 24 residues, 1 to 24 (MAQLLRRHLPVILSLILFLSKATA), serve as a signal peptide directing secretion. The N-linked (GlcNAc...) asparagine glycan is linked to asparagine 27. The region spanning 46–150 (NGACEYGAFG…RRVSCTYPNK (105 aa)) is the Expansin-like EG45 domain. The Expansin-like CBD domain occupies 164–249 (NYLEFEIWYQ…NWTAGATYDS (86 aa)). N-linked (GlcNAc...) asparagine glycans are attached at residues asparagine 189 and asparagine 240.

This sequence belongs to the expansin family. Expansin-like B subfamily.

The protein localises to the secreted. This Oryza sativa subsp. japonica (Rice) protein is Expansin-like B1 (EXLB1).